The sequence spans 354 residues: Ephrin-4 (354 aa).

A signal peptide spans 1–22 (MKRPLDFLLAICLILLRSSTFA). Positions 23 to 173 (DEHTVHWNST…SKNMRLSMKV (151 aa)) constitute an Ephrin RBD domain. Residue Asn30 is glycosylated (N-linked (GlcNAc...) asparagine). Disulfide bonds link Cys55–Cys92 and Cys80–Cys162. The interval 173–196 (VLSSQPTPSPSSKPARSRTDARRQ) is disordered. The segment covering 175-186 (SSQPTPSPSSKP) has biased composition (low complexity). The GPI-anchor amidated serine moiety is linked to residue Ser335. Residues 336–354 (SSSLPTFLIVFLIAVNLLF) constitute a propeptide, removed in mature form.

Belongs to the ephrin family. In terms of processing, may undergo proteolysis by metalloprotease sup-17 to give rise to a soluble form.

It localises to the cell membrane. Its function is as follows. Regulates the formation or stabilization of cell-cell contacts at several stages of epithelial morphogenesis. In early embryonic development, involved in ventral closure of the epidermis. During male tail morphogenesis, regulates precursor cell sorting together with mab-20 and allows the formation of distinct sensory rays. Probably acts as a ligand for lad-2 to regulate axon guidance of several neurons including SDQL, SDQR, SMD and PLN neurons during neurogenesis. This is Ephrin-4 (efn-4) from Caenorhabditis briggsae.